A 957-amino-acid chain; its full sequence is Atromentin synthetase (957 aa).

An adenylation (A) domain region spans residues 59 to 464 (SVQARTFQDF…SGRIKDTVIV (406 aa)). In terms of domain architecture, Carrier spans 596-674 (TPSTDDEKAL…DLAKYVNGLV (79 aa)). The segment at 601 to 671 (DEKALAAIYA…IVSDLAKYVN (71 aa)) is thiolation and peptide carrier (T) domain. O-(pantetheine 4'-phosphoryl)serine is present on Ser633. Residues 697 to 947 (PIFFVHPGVG…FDHVPQFQKI (251 aa)) are thioesterase (TE) domain.

This sequence belongs to the ATP-dependent AMP-binding enzyme family.

It participates in secondary metabolite biosynthesis. In terms of biological role, the L-tyrosine:2-oxoglutarate aminotransferase atrD and the atromentin synthetase atrA catalyze consecutive steps to turn over L-tyrosine into atromentin, which represents the generic precursor molecule for the entire terphenylquinone and pulvinic acid family of pigments, which are widely distributed secondary metabolites in homobasidiomycetes. The first step is catalyzed by atrD which converts L-tyrosine in to 4-hydroxyphenylpyruvate (4-HPP). Adenylation of two 4-HPP monomers by the atrA adenylation (A) domain, ester bond formation between monomers and atrA, and symmetric C-C-bond formation between two monomers by atrA leads to atromentin. The chain is Atromentin synthetase from Tapinella panuoides (Oyster rollrim mushroom).